The chain runs to 199 residues: Adenylyl-sulfate kinase (199 aa).

31–38 (GLSGSGKS) serves as a coordination point for ATP. The active-site Phosphoserine intermediate is the Ser105.

It belongs to the APS kinase family.

It carries out the reaction adenosine 5'-phosphosulfate + ATP = 3'-phosphoadenylyl sulfate + ADP + H(+). Its pathway is sulfur metabolism; hydrogen sulfide biosynthesis; sulfite from sulfate: step 2/3. In terms of biological role, catalyzes the synthesis of activated sulfate. In Marinobacter nauticus (strain ATCC 700491 / DSM 11845 / VT8) (Marinobacter aquaeolei), this protein is Adenylyl-sulfate kinase.